The following is a 1110-amino-acid chain: Serine/threonine-protein kinase PknK (1110 aa).

Positions 26–283 constitute a Protein kinase domain; sequence FDNVEEIGRG…TAADVGEELR (258 aa). ATP is bound by residues 32-40 and K55; that span reads IGRGGFGVV. Residue R148 is the Proton acceptor of the active site. Mg(2+) contacts are provided by N154 and D167. A disordered region spans residues 308 to 343; it reads RSPEAHAAHRHTGGGTPTVPTPPTPATKYRPSVPTG.

It belongs to the protein kinase superfamily. Ser/Thr protein kinase family.

It carries out the reaction L-seryl-[protein] + ATP = O-phospho-L-seryl-[protein] + ADP + H(+). The catalysed reaction is L-threonyl-[protein] + ATP = O-phospho-L-threonyl-[protein] + ADP + H(+). The protein is Serine/threonine-protein kinase PknK (pknK) of Mycobacterium bovis (strain ATCC BAA-935 / AF2122/97).